A 967-amino-acid polypeptide reads, in one-letter code: Leucine--tRNA ligase (967 aa).

The 'HIGH' region motif lies at Pro-43 to His-53. The short motif at Lys-650–Ser-654 is the 'KMSKS' region element. Lys-653 contacts ATP.

The protein belongs to the class-I aminoacyl-tRNA synthetase family.

The protein resides in the cytoplasm. The catalysed reaction is tRNA(Leu) + L-leucine + ATP = L-leucyl-tRNA(Leu) + AMP + diphosphate. The sequence is that of Leucine--tRNA ligase from Pyrococcus abyssi (strain GE5 / Orsay).